The primary structure comprises 445 residues: Phosphoglucosamine mutase (445 aa).

The Phosphoserine intermediate role is filled by S101. The Mg(2+) site is built by S101, D240, D242, and D244. S101 is modified (phosphoserine).

This sequence belongs to the phosphohexose mutase family. The cofactor is Mg(2+). Activated by phosphorylation.

It catalyses the reaction alpha-D-glucosamine 1-phosphate = D-glucosamine 6-phosphate. Functionally, catalyzes the conversion of glucosamine-6-phosphate to glucosamine-1-phosphate. The sequence is that of Phosphoglucosamine mutase from Pseudomonas fluorescens (strain ATCC BAA-477 / NRRL B-23932 / Pf-5).